The following is a 205-amino-acid chain: dITP/XTP pyrophosphatase (205 aa).

Substrate is bound at residue 16 to 21 (TGNPGK). Residues E48 and D77 each coordinate Mg(2+). D77 serves as the catalytic Proton acceptor. Substrate contacts are provided by residues S78, 162–165 (FGYD), K185, and 190–191 (HR).

The protein belongs to the HAM1 NTPase family. In terms of assembly, homodimer. The cofactor is Mg(2+).

It carries out the reaction XTP + H2O = XMP + diphosphate + H(+). The catalysed reaction is dITP + H2O = dIMP + diphosphate + H(+). It catalyses the reaction ITP + H2O = IMP + diphosphate + H(+). In terms of biological role, pyrophosphatase that catalyzes the hydrolysis of nucleoside triphosphates to their monophosphate derivatives, with a high preference for the non-canonical purine nucleotides XTP (xanthosine triphosphate), dITP (deoxyinosine triphosphate) and ITP. Seems to function as a house-cleaning enzyme that removes non-canonical purine nucleotides from the nucleotide pool, thus preventing their incorporation into DNA/RNA and avoiding chromosomal lesions. This is dITP/XTP pyrophosphatase from Erwinia tasmaniensis (strain DSM 17950 / CFBP 7177 / CIP 109463 / NCPPB 4357 / Et1/99).